Reading from the N-terminus, the 242-residue chain is Biosynthetic peptidoglycan transglycosylase (242 aa).

The helical transmembrane segment at 19–39 threads the bilayer; sequence ILAALAVFWGGGIALFSVVPV.

The protein belongs to the glycosyltransferase 51 family.

It localises to the cell inner membrane. The catalysed reaction is [GlcNAc-(1-&gt;4)-Mur2Ac(oyl-L-Ala-gamma-D-Glu-L-Lys-D-Ala-D-Ala)](n)-di-trans,octa-cis-undecaprenyl diphosphate + beta-D-GlcNAc-(1-&gt;4)-Mur2Ac(oyl-L-Ala-gamma-D-Glu-L-Lys-D-Ala-D-Ala)-di-trans,octa-cis-undecaprenyl diphosphate = [GlcNAc-(1-&gt;4)-Mur2Ac(oyl-L-Ala-gamma-D-Glu-L-Lys-D-Ala-D-Ala)](n+1)-di-trans,octa-cis-undecaprenyl diphosphate + di-trans,octa-cis-undecaprenyl diphosphate + H(+). The protein operates within cell wall biogenesis; peptidoglycan biosynthesis. Its function is as follows. Peptidoglycan polymerase that catalyzes glycan chain elongation from lipid-linked precursors. This Salmonella heidelberg (strain SL476) protein is Biosynthetic peptidoglycan transglycosylase.